Consider the following 251-residue polypeptide: Probable transcriptional regulatory protein TGRD_462 (251 aa).

It belongs to the TACO1 family.

It localises to the cytoplasm. The polypeptide is Probable transcriptional regulatory protein TGRD_462 (Endomicrobium trichonymphae).